The following is a 233-amino-acid chain: MLTYENWQEPSITFQEDDLYKGALSVLKWAYGHYGDQLVYACSFGIEGIVLIDLIAKVKKDARIVFLDTGLHFKETYDTIDAVKERYPGLDIVLKTPELTVEEQNDQHGDQLWKTDPQSCCHMRKVIPLQEALSGYPAWLSGLRREQSPKRAGTNFLNKDEKFKSVKVCPLIHWTWKDIWRYASREELTYNPLHDQGYPSIGCAPCTQPAFTAQDLRSGRWSGTAKTECGLHE.

Positions 120, 121, 203, and 206 each coordinate [4Fe-4S] cluster. The active-site Nucleophile; cysteine thiosulfonate intermediate is the Cys229.

It belongs to the PAPS reductase family. CysH subfamily. Requires [4Fe-4S] cluster as cofactor.

It is found in the cytoplasm. The catalysed reaction is [thioredoxin]-disulfide + sulfite + AMP + 2 H(+) = adenosine 5'-phosphosulfate + [thioredoxin]-dithiol. It functions in the pathway sulfur metabolism; hydrogen sulfide biosynthesis; sulfite from sulfate. Its function is as follows. Catalyzes the formation of sulfite from adenosine 5'-phosphosulfate (APS) using thioredoxin as an electron donor. The sequence is that of Adenosine 5'-phosphosulfate reductase from Bacillus pumilus (strain SAFR-032).